The primary structure comprises 126 residues: Protein ApaG (126 aa).

An ApaG domain is found at 2 to 126; it reads SALDDSIRVE…FRLALPGLLH (125 aa).

In Shewanella sp. (strain MR-4), this protein is Protein ApaG.